A 667-amino-acid chain; its full sequence is Sterile alpha motif domain-containing protein 15 (667 aa).

Acidic residues predominate over residues 1–18 (MAEVPEDYDSGPDEDGEP). Disordered stretches follow at residues 1–108 (MAEV…KSER) and 147–424 (SAME…IKSK). Composition is skewed to basic and acidic residues over residues 19–53 (ESERPELHKSYENAERDTMAEADSKLPAEIYHEPQ), 84–93 (IAKESKRDVP), 187–196 (ESLRVQHEET), and 228–266 (TKPDIPEETQRESTEKKRTEPPEQARPEFPEKEPRKSSE). Residues 268–277 (AGLEPPEETQ) show a composition bias toward acidic residues. Composition is skewed to basic and acidic residues over residues 284 to 314 (MQRKATEEKGTELPERTKPDLPDHKSRKSTD), 322 to 338 (EEIKLEFPEEESRKPNE), 346 to 364 (EMMKPESPEEIRKSNEEKN), and 381 to 422 (PRVE…EPIK). Residues 538-601 (WDPEKVAEWI…SRHTRELLEI (64 aa)) form the SAM domain.

The polypeptide is Sterile alpha motif domain-containing protein 15 (SAMD15) (Macaca fascicularis (Crab-eating macaque)).